The following is a 623-amino-acid chain: Putative disease resistance protein At5g47280 (623 aa).

NB-ARC domains follow at residues 2 to 51 and 119 to 249; these read LFNL…VSQS and VDPR…NMLV. 16-23 is an ATP binding site; it reads GMIGSGKT. LRR repeat units follow at residues 488-511, 512-534, 536-558, and 560-581; these read SLNS…SKLQ, ALQL…ICEL, RLVY…IGNV, and TLEK…AVSL.

The protein belongs to the disease resistance NB-LRR family.

Its function is as follows. Potential disease resistance protein. In Arabidopsis thaliana (Mouse-ear cress), this protein is Putative disease resistance protein At5g47280.